Here is a 217-residue protein sequence, read N- to C-terminus: Probable GTP-binding protein EngB (217 aa).

An EngB-type G domain is found at Thr27–Glu201. GTP-binding positions include Gly35 to Ser42, Gly62 to Leu66, Asp80 to Gly83, Thr147 to Asp150, and Phe180 to Ser182. Mg(2+) contacts are provided by Ser42 and Thr64.

This sequence belongs to the TRAFAC class TrmE-Era-EngA-EngB-Septin-like GTPase superfamily. EngB GTPase family. It depends on Mg(2+) as a cofactor.

Functionally, necessary for normal cell division and for the maintenance of normal septation. The chain is Probable GTP-binding protein EngB from Edwardsiella ictaluri (strain 93-146).